Here is a 509-residue protein sequence, read N- to C-terminus: MANQHFAKEAPETYWKTSTDLPSFPALQEDTECDVTIIGGGITGITTAYELTKRGFRVVLIEANQVLNGTTAHTTAKVTAQHDMIYDEFIRHFGLNHARLYYEANQNAIDYIKGIVDEHQIDCEWIEQDAYLYTANENAVQKIHTEHEAYTKLGIERDLIKDLPIPLGSKLALVMKNQAQFHPLQYLKALLEQIVQKGGRIYEETVALDIKKGERPEVVTKSRHAIKSRFIICCSHFPFYDGGGLYAARMYSDRSYVLAIKPKIEYPEGMYLSIDQPSVALRYTVVNGEKLILFSGVSHKTGQGKAMSTHYETLRQLAESTIGIESIPYYWSTQDLVTIDKIPFIGPMSENEDNILVATGFKKWGMTSSAVAATLLSDLVEKKENPYESIFTPSRFHLNPGLQKVISYNADVAKHLIKGKLEKPDVQFEDISPGEGKAVTINGRRAGAFRDETGCLHLVDTTCTHLGCEVEWNDSEHTWDCPCHGSRFKPSGEVVEGPAIKPLKQIDLD.

Positions 423–509 constitute a Rieske domain; sequence KPDVQFEDIS…IKPLKQIDLD (87 aa). Positions 463, 465, 481, and 484 each coordinate [2Fe-2S] cluster. Cys468 and Cys483 are joined by a disulfide.

It belongs to the Rieske iron-sulfur protein family. It depends on [2Fe-2S] cluster as a cofactor.

This chain is Putative Rieske 2Fe-2S iron-sulfur protein YhfW (yhfW), found in Bacillus subtilis (strain 168).